Reading from the N-terminus, the 293-residue chain is Indole-3-glycerol phosphate synthase (293 aa).

Belongs to the TrpC family.

The enzyme catalyses 1-(2-carboxyphenylamino)-1-deoxy-D-ribulose 5-phosphate + H(+) = (1S,2R)-1-C-(indol-3-yl)glycerol 3-phosphate + CO2 + H2O. It functions in the pathway amino-acid biosynthesis; L-tryptophan biosynthesis; L-tryptophan from chorismate: step 4/5. This chain is Indole-3-glycerol phosphate synthase, found in Rippkaea orientalis (strain PCC 8801 / RF-1) (Cyanothece sp. (strain PCC 8801)).